Here is a 417-residue protein sequence, read N- to C-terminus: Gamma-glutamyl phosphate reductase (417 aa).

It belongs to the gamma-glutamyl phosphate reductase family.

Its subcellular location is the cytoplasm. The catalysed reaction is L-glutamate 5-semialdehyde + phosphate + NADP(+) = L-glutamyl 5-phosphate + NADPH + H(+). It participates in amino-acid biosynthesis; L-proline biosynthesis; L-glutamate 5-semialdehyde from L-glutamate: step 2/2. In terms of biological role, catalyzes the NADPH-dependent reduction of L-glutamate 5-phosphate into L-glutamate 5-semialdehyde and phosphate. The product spontaneously undergoes cyclization to form 1-pyrroline-5-carboxylate. The polypeptide is Gamma-glutamyl phosphate reductase (Legionella pneumophila (strain Corby)).